Here is a 1462-residue protein sequence, read N- to C-terminus: Serine/threonine-protein kinase HSL1 (1462 aa).

2 disordered regions span residues 1 to 26 (MSTV…SSSM) and 41 to 69 (RLSQ…KLGR). Residues 65–330 (WKLGRTLGRG…IDAILTHPLL (266 aa)) form the Protein kinase domain. ATP-binding positions include 71 to 79 (LGRGSTGRV) and lysine 94. Residue aspartate 201 is the Proton acceptor of the active site. Disordered stretches follow at residues 412–450 (SNSF…HTTV), 471–540 (SAKG…TSVN), 598–637 (ENSK…TWSL), 992–1031 (EDEE…NYDF), 1095–1230 (KETL…QQTK), and 1269–1321 (NRAA…LQKE). 2 stretches are compositionally biased toward polar residues: residues 428–440 (PRST…TVTD) and 471–487 (SAKG…PNTP). Positions 510 to 526 (ASRSRNASSRSLKSNSS) are enriched in low complexity. Residues 527-540 (TGRNGNNASVTSVN) show a composition bias toward polar residues. A compositionally biased stretch (pro residues) spans 610–620 (QLPPPPPPPIE). Residues 636–715 (SLARRERELA…KLQKHQSAHD (80 aa)) are a coiled coil. Basic and acidic residues predominate over residues 1095 to 1130 (KETLLKNHSSDEATIEVKEDNNEHDFNDKIKQHYDD). The segment covering 1131–1153 (NGDSEEDDEDEDEEEEDDDDDDD) has biased composition (acidic residues). Polar residues-rich tracts occupy residues 1165 to 1176 (HNYSLAEITSES), 1197 to 1218 (STGI…NNGD), and 1292 to 1302 (NISQPLSSPTK).

Belongs to the protein kinase superfamily. CAMK Ser/Thr protein kinase family. NIM1 subfamily. Phosphorylated throughout the cell cycle, except for the G1 phase.

Its subcellular location is the bud neck. The catalysed reaction is L-seryl-[protein] + ATP = O-phospho-L-seryl-[protein] + ADP + H(+). It catalyses the reaction L-threonyl-[protein] + ATP = O-phospho-L-threonyl-[protein] + ADP + H(+). Protein kinase involved in determination of morphology during the cell cycle of both yeast-form and hyphal cells via regulation of SWE1 and CDC28. Regulates pseudohypha formation, but is not required for septin ring organization or septum formation. Plays an essential role in virulence in a mouse model. The protein is Serine/threonine-protein kinase HSL1 (HSL1) of Candida albicans (strain SC5314 / ATCC MYA-2876) (Yeast).